Reading from the N-terminus, the 194-residue chain is Probable proteasome subunit beta type-4 (194 aa).

Belongs to the peptidase T1B family. In terms of assembly, the 26S proteasome consists of a 20S proteasome core and two 19S regulatory subunits. The 20S proteasome core is composed of 28 subunits that are arranged in four stacked rings, resulting in a barrel-shaped structure. The two end rings are each formed by seven alpha subunits, and the two central rings are each formed by seven beta subunits. The catalytic chamber with the active sites is on the inside of the barrel.

Its subcellular location is the cytoplasm. The protein resides in the nucleus. In terms of biological role, non-catalytic component of the proteasome, a multicatalytic proteinase complex which is characterized by its ability to cleave peptides with Arg, Phe, Tyr, Leu, and Glu adjacent to the leaving group at neutral or slightly basic pH. The proteasome has an ATP-dependent proteolytic activity. This Schizosaccharomyces pombe (strain 972 / ATCC 24843) (Fission yeast) protein is Probable proteasome subunit beta type-4.